The sequence spans 313 residues: Probable cell division protein WhiA (313 aa).

A DNA-binding region (H-T-H motif) is located at residues 275-308 (SLRELGELAQPPLSKSCVNHRLRKLEQIAEHILA).

It belongs to the WhiA family.

Its function is as follows. Involved in cell division and chromosome segregation. This chain is Probable cell division protein WhiA, found in Desulforudis audaxviator (strain MP104C).